Here is a 350-residue protein sequence, read N- to C-terminus: Protein TRIGALACTOSYLDIACYLGLYCEROL 1, chloroplastic (350 aa).

The disordered stretch occupies residues 67–86; the sequence is SMSMLEEETSTENNAPSQEA. Residues 98–117 traverse the membrane as a helical segment; sequence YIWRGLSVPIIAGQVVLRIL. Residues 118–136 lie on the Stromal side of the membrane; it reads KGKIHWRNTLQQLERTGPK. The chain crosses the membrane as a helical span at residues 137–157; it reads SLGVCLLTSTFVGMAFTIQFV. Residues 158–168 lie on the Chloroplast intermembrane side of the membrane; the sequence is REFTRLGLNRS. The chain crosses the membrane as a helical span at residues 169 to 189; it reads IGGVLALAFSRELSPVITSIV. Topologically, residues 190 to 229 are stromal; the sequence is VAGRMGSAFAAELGTMQVSEQTDTLRVLGADPIDYLITPR. Residues 230-250 form a helical membrane-spanning segment; sequence VIASCLALPFLTLMCFTVGMA. Residues 251 to 288 are Chloroplast intermembrane-facing; that stretch reads SSALLSDAVYGISINIIMDSAHRALRPWDIVSAMIKSQ. A helical transmembrane segment spans residues 289–309; it reads VFGAIISVISCSWGVTTTGGA. The Stromal portion of the chain corresponds to 310 to 318; the sequence is KGVGESTTS. A helical transmembrane segment spans residues 319–339; the sequence is AVVMSLVGIFIADFVLSSFFF. The Chloroplast intermembrane segment spans residues 340 to 350; that stretch reads QGAGDSLKNCV.

Belongs to the MlaE permease family. In terms of assembly, permease subunit of the TGD complex, a lipid translocator at the inner chloroplast envelope membrane made of TGD1, TGD2 and TGD3. Interacts with TGD2 and TGD3 with an overall subunit stoichiometry of 2 TGD1, 2 TGD3 and 8 to 12 TGD2. Interacts with TGD5. As to expression, high levels in green tissues, but low levels in nongreen tissues such as roots.

It is found in the plastid. The protein localises to the chloroplast inner membrane. In terms of biological role, required during embryogenesis. Permease involved in lipid transfer from the endoplasmic reticulum (ER) to plastids, and necessary for thylakoids formation. This Arabidopsis thaliana (Mouse-ear cress) protein is Protein TRIGALACTOSYLDIACYLGLYCEROL 1, chloroplastic.